The chain runs to 249 residues: Ribosomal RNA small subunit methyltransferase G (249 aa).

Residues Gly-88, Phe-93, 111–113 (DAT), 139–140 (AE), and Arg-158 contribute to the S-adenosyl-L-methionine site.

It belongs to the methyltransferase superfamily. RNA methyltransferase RsmG family.

It localises to the cytoplasm. Specifically methylates the N7 position of a guanine in 16S rRNA. The polypeptide is Ribosomal RNA small subunit methyltransferase G (Thermus thermophilus (strain ATCC BAA-163 / DSM 7039 / HB27)).